Consider the following 370-residue polypeptide: Anhydro-N-acetylmuramic acid kinase (370 aa).

13 to 20 provides a ligand contact to ATP; it reads GTSMDGVD.

It belongs to the anhydro-N-acetylmuramic acid kinase family.

The enzyme catalyses 1,6-anhydro-N-acetyl-beta-muramate + ATP + H2O = N-acetyl-D-muramate 6-phosphate + ADP + H(+). It functions in the pathway amino-sugar metabolism; 1,6-anhydro-N-acetylmuramate degradation. It participates in cell wall biogenesis; peptidoglycan recycling. Functionally, catalyzes the specific phosphorylation of 1,6-anhydro-N-acetylmuramic acid (anhMurNAc) with the simultaneous cleavage of the 1,6-anhydro ring, generating MurNAc-6-P. Is required for the utilization of anhMurNAc either imported from the medium or derived from its own cell wall murein, and thus plays a role in cell wall recycling. The chain is Anhydro-N-acetylmuramic acid kinase from Vibrio parahaemolyticus serotype O3:K6 (strain RIMD 2210633).